A 178-amino-acid chain; its full sequence is Peptidyl-prolyl cis-trans isomerase (178 aa).

Residues 1–17 (MKLLFFFLVLAVSAAVA) form the signal peptide. In terms of domain architecture, PPIase cyclophilin-type spans 26–177 (FMDIEIDGES…KIAKITDIGL (152 aa)).

This sequence belongs to the cyclophilin-type PPIase family. PPIase A subfamily.

It carries out the reaction [protein]-peptidylproline (omega=180) = [protein]-peptidylproline (omega=0). In terms of biological role, PPIases accelerate the folding of proteins. It catalyzes the cis-trans isomerization of proline imidic peptide bonds in oligopeptides. Up-regulates interferon gamma production by bovine T-cells. Stimulates high levels of IFN-gamma production by peripheral blood mononuclear cells and T-cells. The IFN-gamma-inducing effect is blocked by cyclosporin A (CsA). This chain is Peptidyl-prolyl cis-trans isomerase, found in Neospora caninum (Coccidian parasite).